A 364-amino-acid polypeptide reads, in one-letter code: MTSGPSQPFPSASGPDDGPSWPRILGRLTTGQNLPNGHAAWAMDQIMTGAATPAQISGFAVSMKMKRPTASEVRELADIMLTHARRVPTDEIGTDTVDIVGTGGDGANTVNLSTMASIVVAACGVPVVKHGNRAASSLSGGADTLEALGVRIDLGPDDVARSVREVGIGFAFAPQFHPSYKHASIVRREIGVPTVFNLLGPLTNPAGPRAGLIGCAWADLAEVMAGVFAARGSSVLVVHGDDGLDELTTTTTSTIWRVQGGTMERLTFDPAAFGFKRAEISELVGGDASENAAEARAVLGGAKGPVRDAVVLNAAGAMVAHAGLASDAQWLPAWEAGLARAVEAIDSGAAEQLLARWVRFGQQL.

Residues 1–10 (MTSGPSQPFP) show a composition bias toward polar residues. The interval 1 to 22 (MTSGPSQPFPSASGPDDGPSWP) is disordered. 5-phospho-alpha-D-ribose 1-diphosphate-binding positions include Gly101, 104 to 105 (GD), Thr109, 111 to 114 (NLST), 129 to 137 (KHGNRAASS), and Gly141. Gly101 serves as a coordination point for anthranilate. Residue Ser113 participates in Mg(2+) binding. Asn132 serves as a coordination point for anthranilate. Anthranilate is bound at residue Arg187. Mg(2+) contacts are provided by Asp245 and Glu246.

The protein belongs to the anthranilate phosphoribosyltransferase family. As to quaternary structure, homodimer. Requires Mg(2+) as cofactor.

It carries out the reaction N-(5-phospho-beta-D-ribosyl)anthranilate + diphosphate = 5-phospho-alpha-D-ribose 1-diphosphate + anthranilate. The protein operates within amino-acid biosynthesis; L-tryptophan biosynthesis; L-tryptophan from chorismate: step 2/5. In terms of biological role, catalyzes the transfer of the phosphoribosyl group of 5-phosphorylribose-1-pyrophosphate (PRPP) to anthranilate to yield N-(5'-phosphoribosyl)-anthranilate (PRA). This chain is Anthranilate phosphoribosyltransferase, found in Mycolicibacterium smegmatis (strain ATCC 700084 / mc(2)155) (Mycobacterium smegmatis).